Consider the following 113-residue polypeptide: Hydrogenase maturation factor HypA (113 aa).

Ni(2+) is bound at residue His2. Zn(2+)-binding residues include Cys73, Cys76, Cys89, and Cys92.

This sequence belongs to the HypA/HybF family.

Its function is as follows. Involved in the maturation of [NiFe] hydrogenases. Required for nickel insertion into the metal center of the hydrogenase. The sequence is that of Hydrogenase maturation factor HypA from Moorella thermoacetica (strain ATCC 39073 / JCM 9320).